Here is a 302-residue protein sequence, read N- to C-terminus: 4-hydroxy-tetrahydrodipicolinate synthase (302 aa).

Threonine 49 provides a ligand contact to pyruvate. Tyrosine 137 serves as the catalytic Proton donor/acceptor. The active-site Schiff-base intermediate with substrate is lysine 166. Isoleucine 208 contributes to the pyruvate binding site.

It belongs to the DapA family. Homotetramer; dimer of dimers.

It is found in the cytoplasm. The enzyme catalyses L-aspartate 4-semialdehyde + pyruvate = (2S,4S)-4-hydroxy-2,3,4,5-tetrahydrodipicolinate + H2O + H(+). Its pathway is amino-acid biosynthesis; L-lysine biosynthesis via DAP pathway; (S)-tetrahydrodipicolinate from L-aspartate: step 3/4. Its function is as follows. Catalyzes the condensation of (S)-aspartate-beta-semialdehyde [(S)-ASA] and pyruvate to 4-hydroxy-tetrahydrodipicolinate (HTPA). The chain is 4-hydroxy-tetrahydrodipicolinate synthase from Chloroherpeton thalassium (strain ATCC 35110 / GB-78).